The primary structure comprises 811 residues: Vacuolar protein sorting-associated protein 70 (811 aa).

Over residues 1 to 21 (MRMIQRERKREKEEGQLKERT) the composition is skewed to basic and acidic residues. The disordered stretch occupies residues 1 to 63 (MRMIQRERKR…MNDSFTLTSR (63 aa)). N-linked (GlcNAc...) asparagine glycosylation occurs at Asn-55. A helical membrane pass occupies residues 90-110 (FMYLILASLLLYMGFVAAFAP). Asn-237 is a glycosylation site (N-linked (GlcNAc...) asparagine). Residues 334 to 367 (FSDTPGDPTTPGYPSKDSDTEHMSPVGRVPRIPS) form a disordered region. Residues 336–345 (DTPGDPTTPG) show a composition bias toward low complexity. Residues His-445, Asp-456, and Asp-522 each coordinate Zn(2+). Residues Asn-568 and Asn-599 are each glycosylated (N-linked (GlcNAc...) asparagine). Residue His-607 coordinates Zn(2+). The N-linked (GlcNAc...) asparagine glycan is linked to Asn-670.

This sequence belongs to the peptidase M28 family. M28B subfamily. Zn(2+) is required as a cofactor.

It localises to the membrane. Functionally, involved in vacuolar protein sorting. In Saccharomyces cerevisiae (strain ATCC 204508 / S288c) (Baker's yeast), this protein is Vacuolar protein sorting-associated protein 70 (VPS70).